The chain runs to 2820 residues: Neurofibromin (2820 aa).

Ala-2 is modified (N-acetylalanine). Ser-866 and Ser-878 each carry phosphoserine. One can recognise a Ras-GAP domain in the interval 1253–1463; sequence HLLYQLLWNM…DLARRFFLDI (211 aa). The CRAL-TRIO domain occupies 1561–1719; sequence EKEEFKALKT…ATLALEEDLK (159 aa). A lipid binding region spans residues 1561 to 1818; it reads EKEEFKALKT…RTRWELSQPD (258 aa). Ser-2169 and Ser-2448 each carry phosphoserine. Residues 2457 to 2482 are disordered; sequence YPIHHGDPSSRTLKETQPWSSPRGSE. The segment covering 2458-2470 has biased composition (basic and acidic residues); sequence PIHHGDPSSRTLK. The residue at position 2495 (Thr-2495) is a Phosphothreonine. 4 positions are modified to phosphoserine: Ser-2496, Ser-2502, Ser-2504, and Ser-2524. Residues 2536-2552 carry the Bipartite nuclear localization signal motif; sequence KRQEMESGITTPPKMRR. Thr-2546 carries the post-translational modification Phosphothreonine. A phosphoserine mark is found at Ser-2578, Ser-2783, and Ser-2798. The segment at 2768 to 2820 is disordered; the sequence is TSQHSPGIDKENVELSPTTGHCNSGRTRHGSASQVQKQRSAGSFKRNSIKKIV. Polar residues predominate over residues 2782–2808; that stretch reads LSPTTGHCNSGRTRHGSASQVQKQRSA.

As to quaternary structure, interacts with HTR6. Interacts with SPRED2. In terms of processing, ubiquitinated by RNF7/RBX2, leading to its degradation.

It is found in the nucleus. It localises to the nucleolus. The protein resides in the cell membrane. In terms of biological role, stimulates the GTPase activity of Ras. NF1 shows greater affinity for Ras GAP, but lower specific activity. May be a regulator of Ras activity. In Rattus norvegicus (Rat), this protein is Neurofibromin (Nf1).